Reading from the N-terminus, the 666-residue chain is Probable potassium transport system protein Kup (666 aa).

Transmembrane regions (helical) follow at residues 16–36, 58–78, 100–120, 141–161, 165–185, 221–241, 253–273, 292–312, 343–363, 373–393, 399–419, and 424–444; these read GFII…LYTM, ISLI…LIAL, PWLI…GALT, IYQN…VLFG, FGTG…FSFL, IFIL…YSDL, WPFV…WILA, LTVY…QALI, LYIP…VLYF, YGLA…YYLI, PFLA…FFWA, and FMHG…VMFI.

This sequence belongs to the HAK/KUP transporter (TC 2.A.72) family.

The protein localises to the cell membrane. It carries out the reaction K(+)(in) + H(+)(in) = K(+)(out) + H(+)(out). Transport of potassium into the cell. Likely operates as a K(+):H(+) symporter. The polypeptide is Probable potassium transport system protein Kup (Streptococcus pyogenes serotype M18 (strain MGAS8232)).